We begin with the raw amino-acid sequence, 310 residues long: 4-hydroxyproline 2-epimerase (310 aa).

Cysteine 88 serves as the catalytic Proton acceptor. Substrate-binding positions include 89-90 (GH), histidine 208, and aspartate 232. The active-site Proton donor is the cysteine 236. 237-238 (GT) contacts substrate.

The protein belongs to the proline racemase family.

The catalysed reaction is trans-4-hydroxy-L-proline = cis-4-hydroxy-D-proline. Its function is as follows. Catalyzes the epimerization of trans-4-hydroxy-L-proline (t4LHyp) to cis-4-hydroxy-D-proline (c4DHyp). Is likely involved in a degradation pathway that converts t4LHyp to alpha-ketoglutarate. Displays no proline racemase activity. The polypeptide is 4-hydroxyproline 2-epimerase (Acinetobacter baumannii (strain AYE)).